Consider the following 178-residue polypeptide: Disulfide bond formation protein B (178 aa).

Residues 1 to 14 (MLSFFKTLSTKRSA) lie on the Cytoplasmic side of the membrane. Residues 15-31 (WFLLFSSALLLEAIALY) traverse the membrane as a helical segment. The Periplasmic segment spans residues 32 to 49 (FQHGMGLAPCVMCIYERV). A disulfide bridge links cysteine 41 with cysteine 44. Residues 50-65 (AILGIAFSGLLGLLYP) form a helical membrane-spanning segment. At 66–72 (SSMLLRL) the chain is on the cytoplasmic side. A helical membrane pass occupies residues 73-90 (VALLIGLSSAIKGLMISI). The Periplasmic segment spans residues 91-145 (THLDLQLYPAPWKQCSAVAEFPETLPLDQWFPALFLPSGSCSEVTWQFLGFSMVQ). A disulfide bond links cysteine 105 and cysteine 131. A helical membrane pass occupies residues 146 to 164 (WIVVIFALYTLLLALIFIS). Over 165–177 (QVKRLKPKQRRLF) the chain is Cytoplasmic.

Belongs to the DsbB family.

It localises to the cell inner membrane. Functionally, required for disulfide bond formation in some periplasmic proteins. Acts by oxidizing the DsbA protein. The polypeptide is Disulfide bond formation protein B (Pasteurella multocida (strain Pm70)).